A 735-amino-acid polypeptide reads, in one-letter code: Ion-translocating oxidoreductase complex subunit C (735 aa).

4Fe-4S ferredoxin-type domains lie at 368–397 and 407–436; these read MGAPQEEKSCIRCSACADACPADLLPQQLY and KATAHHIADCIECGACAWVCPSNIPLVQYF. Residues C377, C380, C383, C387, C416, C419, C422, and C426 each contribute to the [4Fe-4S] cluster site. The tract at residues 534-715 is disordered; it reads QARAKQAAHP…AVDPRKAAVA (182 aa). The span at 666 to 689 shows a compositional bias: low complexity; that stretch reads QQAGSEPAEPAAPRKAAVEAAIAR.

Belongs to the 4Fe4S bacterial-type ferredoxin family. RnfC subfamily. In terms of assembly, the complex is composed of six subunits: RsxA, RsxB, RsxC, RsxD, RsxE and RsxG. Requires [4Fe-4S] cluster as cofactor.

Its subcellular location is the cell inner membrane. In terms of biological role, part of a membrane-bound complex that couples electron transfer with translocation of ions across the membrane. Required to maintain the reduced state of SoxR. In Salmonella paratyphi B (strain ATCC BAA-1250 / SPB7), this protein is Ion-translocating oxidoreductase complex subunit C.